A 627-amino-acid polypeptide reads, in one-letter code: Xaa-Pro aminopeptidase 1 (627 aa).

2 residues coordinate a peptide: arginine 88 and histidine 405. Mn(2+)-binding residues include aspartate 424, aspartate 435, and histidine 498. 3 residues coordinate a peptide: histidine 498, histidine 507, and glutamate 533. The Mn(2+) site is built by glutamate 533 and glutamate 547.

It belongs to the peptidase M24B family. In terms of assembly, homodimer. The cofactor is Mn(2+).

It is found in the cytoplasm. Its subcellular location is the cytosol. The enzyme catalyses Release of any N-terminal amino acid, including proline, that is linked to proline, even from a dipeptide or tripeptide.. Its function is as follows. Metalloaminopeptidase that catalyzes the removal of a penultimate prolyl residue from the N-termini of peptides, such as Arg-Pro-Pro. The protein is Xaa-Pro aminopeptidase 1 (xpnpep1) of Dictyostelium discoideum (Social amoeba).